A 425-amino-acid polypeptide reads, in one-letter code: Adenylosuccinate synthetase (425 aa).

GTP contacts are provided by residues 12–18 (GDEGKGK) and 40–42 (GHT). Asp13 acts as the Proton acceptor in catalysis. Asp13 and Gly40 together coordinate Mg(2+). IMP-binding positions include 13 to 16 (DEGK), 38 to 41 (NAGH), Thr129, Arg143, Asn221, Thr236, and Arg300. His41 functions as the Proton donor in the catalytic mechanism. 296 to 302 (VTTGRKR) provides a ligand contact to substrate. Residues Arg302, 328-330 (KLD), and 410-412 (GVG) contribute to the GTP site.

It belongs to the adenylosuccinate synthetase family. Homodimer. The cofactor is Mg(2+).

The protein resides in the cytoplasm. The enzyme catalyses IMP + L-aspartate + GTP = N(6)-(1,2-dicarboxyethyl)-AMP + GDP + phosphate + 2 H(+). The protein operates within purine metabolism; AMP biosynthesis via de novo pathway; AMP from IMP: step 1/2. Functionally, plays an important role in the de novo pathway and in the salvage pathway of purine nucleotide biosynthesis. Catalyzes the first committed step in the biosynthesis of AMP from IMP. This Phaeosphaeria nodorum (strain SN15 / ATCC MYA-4574 / FGSC 10173) (Glume blotch fungus) protein is Adenylosuccinate synthetase.